The chain runs to 174 residues: Large ribosomal subunit protein uL16 (174 aa).

The protein belongs to the universal ribosomal protein uL16 family.

This is Large ribosomal subunit protein uL16 from Staphylothermus marinus (strain ATCC 43588 / DSM 3639 / JCM 9404 / F1).